The chain runs to 99 residues: Protein MOST-1 (99 aa).

In terms of assembly, interacts with TSPO, IGHM and IGHD. In terms of tissue distribution, expressed in the heart, kidney, liver, pancreas, small intestine, ovary, testis, prostate and thymus. Expressed in all of the cancer cell lines tested.

The protein resides in the cytoplasm. Its subcellular location is the microsome membrane. The protein localises to the endoplasmic reticulum membrane. Its function is as follows. May be involved in cell survival, proliferation and progression of cancer cells. The polypeptide is Protein MOST-1 (C8orf17) (Homo sapiens (Human)).